The following is a 165-amino-acid chain: Polcalcin Cup a 4 (165 aa).

4 consecutive EF-hand domains span residues 22-57, 58-86, 91-126, and 127-162; these read QSVH…MGSE, VDEA…FVDL, ATVK…VGEP, and CTIE…EMTD. Residues Asp-35, Asn-37, Asp-39, Lys-41, Glu-46, Asp-71, Asp-73, Asp-75, Tyr-77, Glu-82, Asp-104, Asp-106, Asn-108, Thr-110, Glu-115, Asp-140, Asn-142, Asp-144, and Glu-151 each contribute to the Ca(2+) site.

May exist as monomer and dimer. In terms of tissue distribution, expressed in mature pollen grains.

This Hesperocyparis arizonica (Arizona cypress) protein is Polcalcin Cup a 4.